Here is a 158-residue protein sequence, read N- to C-terminus: MIPGEYILSSESLTGNVGREAKTIEIINTGDRPVQIGSHFHFAEVNPSISFDRSEGYGFRLDIPSGTAVRLEPGDARTVNLVAIGGDRIVAGFRDLVDGPLEDLKVNVWEGREDDWRRSSAAGDAPQELPQVEAAERGRKLDEATDVGTEDTPEEGQN.

The tract at residues 113 to 158 (EDDWRRSSAAGDAPQELPQVEAAERGRKLDEATDVGTEDTPEEGQN) is disordered. The segment covering 134-143 (AAERGRKLDE) has biased composition (basic and acidic residues). Acidic residues predominate over residues 144–158 (ATDVGTEDTPEEGQN).

It belongs to the urease beta subunit family. Heterotrimer of UreA (gamma), UreB (beta) and UreC (alpha) subunits. Three heterotrimers associate to form the active enzyme.

The protein resides in the cytoplasm. The catalysed reaction is urea + 2 H2O + H(+) = hydrogencarbonate + 2 NH4(+). Its pathway is nitrogen metabolism; urea degradation; CO(2) and NH(3) from urea (urease route): step 1/1. The protein is Urease subunit beta of Corynebacterium glutamicum (strain R).